A 187-amino-acid chain; its full sequence is MATWGRRRAGLGGRERVTLSAGECYIVHEIYNGENAQDQFEYELEQALEAQYKYIVIEPTRIGDETARWVTVGNCLHKTAVLSGTACLLTPLALPAEYSHYVSLPAGVLSLACSTLYGISWQFDPCCKYQVEYDAYKLSRLPLHTLTSSSPVVLVRKDDIHRKRLHNTIALAALAYCIKKLYELYSV.

2 helical membrane-spanning segments follow: residues 79-95 (TAVL…LALP) and 102-119 (VSLP…LYGI).

This sequence belongs to the TMEM11 family.

It localises to the mitochondrion inner membrane. Its function is as follows. Plays a role in mitochondrial morphogenesis. This Xenopus laevis (African clawed frog) protein is Transmembrane protein 11-A, mitochondrial (tmem11-a).